We begin with the raw amino-acid sequence, 148 residues long: Globin-3 (148 aa).

The Globin domain maps to 2–148 (TLTKHEQDIL…HVFPMMAAEI (147 aa)). Histidine 99 is a heme binding site.

It belongs to the globin family. Monomer.

Its function is as follows. Oxygen binding protein. The chain is Globin-3 from Paramphistomum epiclitum.